The chain runs to 452 residues: Zinc finger protein 672 (452 aa).

4 C2H2-type zinc fingers span residues 14-36 (YSCS…ERAH), 42-64 (FRCL…RRTH), 70-92 (YICS…LGAH), and 99-122 (CPCR…RRQH). The C2H2-type 5; degenerate zinc-finger motif lies at 128-150 (RRCPLCARTFRQSALLFHQARAH). C2H2-type zinc fingers lie at residues 163–185 (HRCA…ARIH), 199–221 (HQCG…LQTH), 227–249 (FKCP…QRTH), 255–277 (YACG…RRSH), 283–305 (HACA…QRIH), 311–333 (FACP…RRTH), 339–361 (YRCE…RRNH), 367–389 (HKCP…RKTH), and 395–417 (AECA…QRAH).

The protein belongs to the krueppel C2H2-type zinc-finger protein family.

Its subcellular location is the nucleus. May be involved in transcriptional regulation. The protein is Zinc finger protein 672 of Homo sapiens (Human).